Reading from the N-terminus, the 1492-residue chain is DNA polymerase alpha catalytic subunit (1492 aa).

Disordered regions lie at residues 34–112 (DFIV…VEQS), 162–195 (SVTL…DVNP), and 210–234 (ANSY…EMAN). Residues 42–55 (YGYRDHGGEIWDRD) show a composition bias toward basic and acidic residues. A compositionally biased stretch (polar residues) spans 93–105 (NAASTNPSAQQKP). The span at 166–178 (ESREEQERRRQSE) shows a compositional bias: basic and acidic residues. 2 stretches are compositionally biased toward polar residues: residues 184–194 (ANIGQNQSDVN) and 210–224 (ANSY…SVSK). Positions 1314, 1317, 1341, 1344, 1375, 1380, 1393, and 1398 each coordinate Zn(2+). The segment at 1314-1344 (CPHCAHNYHFPGILVPSSNNTELTGLACVKC) adopts a CysA-type zinc-finger fold. A CysB motif motif is present at residues 1375–1398 (CKEPQCGMKTNQLLLNNKCIVKGC).

Belongs to the DNA polymerase type-B family.

The protein resides in the nucleus. The catalysed reaction is DNA(n) + a 2'-deoxyribonucleoside 5'-triphosphate = DNA(n+1) + diphosphate. Polymerase alpha in a complex with DNA primase is a replicative polymerase. The sequence is that of DNA polymerase alpha catalytic subunit from Sterkiella nova (Ciliate).